The sequence spans 239 residues: MEFFNILQSACNDVNLDFNDKKYNQLISYKNLIQEWNKKINLTAIVEDDEIIKKHFIDCIKIFKSSPIGEAKSLIDIGTGAGFPGIPIKILKEDIEITLLDSLQKRINFLNIVIGELQLKNIQCLHGRAEDYAQEIQHRQKYDIAVSRAVANLAVLSEFCIPFVEKGGYFIAMKGPSVEEEITAATKSIEILGGKIEDIMKIDIEDTDLKHNLVIIKKLRETGKRYPRKPGIIKKNPLK.

S-adenosyl-L-methionine is bound by residues Gly78, Phe83, Ala129 to Glu130, and Arg148.

This sequence belongs to the methyltransferase superfamily. RNA methyltransferase RsmG family.

It is found in the cytoplasm. Functionally, specifically methylates the N7 position of a guanine in 16S rRNA. This is Ribosomal RNA small subunit methyltransferase G from Clostridium botulinum (strain Kyoto / Type A2).